Consider the following 458-residue polypeptide: ATP synthase subunit beta (458 aa).

148–155 provides a ligand contact to ATP; that stretch reads GGAGVGKT.

It belongs to the ATPase alpha/beta chains family. F-type ATPases have 2 components, CF(1) - the catalytic core - and CF(0) - the membrane proton channel. CF(1) has five subunits: alpha(3), beta(3), gamma(1), delta(1), epsilon(1). CF(0) has three main subunits: a(1), b(2) and c(9-12). The alpha and beta chains form an alternating ring which encloses part of the gamma chain. CF(1) is attached to CF(0) by a central stalk formed by the gamma and epsilon chains, while a peripheral stalk is formed by the delta and b chains.

The protein localises to the cell inner membrane. The enzyme catalyses ATP + H2O + 4 H(+)(in) = ADP + phosphate + 5 H(+)(out). Produces ATP from ADP in the presence of a proton gradient across the membrane. The catalytic sites are hosted primarily by the beta subunits. The protein is ATP synthase subunit beta of Francisella tularensis subsp. novicida (strain U112).